The chain runs to 447 residues: Serine/threonine-protein phosphatase 2A 55 kDa regulatory subunit B alpha isoform (447 aa).

Position 2 is an N-acetylalanine (Ala2). WD repeat units follow at residues 11–80, 94–174, 175–218, 227–270, 288–325, 347–381, and 414–446; these read QWCF…FQSH, EKIN…IFAN, AHTY…VDIK, EVIT…KLFE, ISDV…TYQV, ECCW…TLEA, and DFNK…QDKV.

It belongs to the phosphatase 2A regulatory subunit B family. PP2A consists of a common heterodimeric core enzyme, composed of a 36 kDa catalytic subunit (subunit C) and a 65 kDa constant regulatory subunit (PR65 or subunit A), that associates with a variety of regulatory subunits. Proteins that associate with the core dimer include three families of regulatory subunits B (the R2/B/PR55/B55, R3/B''/PR72/PR130/PR59 and R5/B'/B56 families), the 48 kDa variable regulatory subunit, viral proteins, and cell signaling molecules. Interacts with the PP2A C catalytic subunit PPP2CA. Interacts with the PP2A A subunit PPP2R1A. Found in a complex with at least ARL2, PPP2CB, PPP2R1A, PPP2R2A, PPP2R5E and TBCD. Interacts with MFHAS1; the interaction is direct. Interacts with PABIR1/FAM122A (via its N-terminus); the interaction is direct and inhibits PP2A activity. Interacts with ARPP19; the interaction is direct and inhibits PP2A activity. Interacts with CRTC3. Brain.

In terms of biological role, substrate-recognition subunit of protein phosphatase 2A (PP2A) that plays a key role in cell cycle by controlling mitosis entry and exit. Involved in chromosome clustering during late mitosis by mediating dephosphorylation of MKI67. Essential for serine/threonine-protein phosphatase 2A-mediated dephosphorylation of WEE1, preventing its ubiquitin-mediated proteolysis, increasing WEE1 protein levels, and promoting the G2/M checkpoint. This Rattus norvegicus (Rat) protein is Serine/threonine-protein phosphatase 2A 55 kDa regulatory subunit B alpha isoform (Ppp2r2a).